Here is a 273-residue protein sequence, read N- to C-terminus: WIMGHMVNAIAQIDEFVNLGANSIETDVSFDKNANPEYTYHGIPCDCGRTCTKSEKFNVFLQGLQKATTPGDSKYQVKLVLVVFDLKSSSLYDNQASDAGKKLAKSLLQNYWKNGNNGGRAYIVLSIPNLTHYKLITGFKETPKTEGHPELMEKVGYDFSGNDDIDQVAKAYKKAGVTGHVWQSDGITNCLPRGLDRVKQAVANRDSSNGFINKVYYWTVGKRSTTRGALDAGVDGIMTNYPDVIADVLSESAYKSKFRIATYEDNPWETFKN.

The active site involves histidine 5. Positions 25 and 27 each coordinate Mg(2+). Histidine 41 (nucleophile) is an active-site residue. Disulfide bonds link cysteine 45–cysteine 51 and cysteine 47–cysteine 190. Mg(2+) is bound at residue aspartate 85.

This sequence belongs to the arthropod phospholipase D family. Class II subfamily. It depends on Mg(2+) as a cofactor. As to expression, expressed by the venom gland.

It localises to the secreted. It carries out the reaction an N-(acyl)-sphingosylphosphocholine = an N-(acyl)-sphingosyl-1,3-cyclic phosphate + choline. It catalyses the reaction an N-(acyl)-sphingosylphosphoethanolamine = an N-(acyl)-sphingosyl-1,3-cyclic phosphate + ethanolamine. The enzyme catalyses a 1-acyl-sn-glycero-3-phosphocholine = a 1-acyl-sn-glycero-2,3-cyclic phosphate + choline. The catalysed reaction is a 1-acyl-sn-glycero-3-phosphoethanolamine = a 1-acyl-sn-glycero-2,3-cyclic phosphate + ethanolamine. Dermonecrotic toxins cleave the phosphodiester linkage between the phosphate and headgroup of certain phospholipids (sphingolipid and lysolipid substrates), forming an alcohol (often choline) and a cyclic phosphate. This toxin acts on sphingomyelin (SM). It may also act on ceramide phosphoethanolamine (CPE), lysophosphatidylcholine (LPC) and lysophosphatidylethanolamine (LPE), but not on lysophosphatidylserine (LPS), and lysophosphatidylglycerol (LPG). It acts by transphosphatidylation, releasing exclusively cyclic phosphate products as second products. Induces dermonecrosis, hemolysis, increased vascular permeability, edema, inflammatory response, and platelet aggregation. The sequence is that of Dermonecrotic toxin LdSicTox-alphaIB3avi from Loxosceles deserta (Desert recluse spider).